The primary structure comprises 217 residues: Histone H1C (217 aa).

Low complexity-rich tracts occupy residues 1 to 11 (MAETASTETTP) and 28 to 45 (KKAA…PSAS). Disordered stretches follow at residues 1 to 45 (MAET…PSAS) and 123 to 217 (VAKK…AAKK). The 74-residue stretch at 40-113 (SGPSASELIV…GASGSFKLNK (74 aa)) folds into the H15 domain. Composition is skewed to basic residues over residues 123–151 (VAKK…KPKK) and 159–217 (SPKK…AAKK).

The protein belongs to the histone H1/H5 family.

Its subcellular location is the nucleus. It localises to the chromosome. Functionally, histones H1 are necessary for the condensation of nucleosome chains into higher-order structures. This Xenopus laevis (African clawed frog) protein is Histone H1C.